A 551-amino-acid chain; its full sequence is Putative transport protein CGSHiEE_03135 (551 aa).

5 helical membrane-spanning segments follow: residues 4–24 (IAITISLLALVAVIGLWIGHW), 28–48 (GVGLGIGGVLFGGIIVAHFTD), 65–85 (FGLILFVYTIGIQVGPGFFSS), 95–115 (AFAILIIVLGSIAVVLVHKIA), and 157–177 (VSYAMAYPFGICGILLAMWLI). 2 consecutive RCK C-terminal domains span residues 191–275 (RFNA…IIGY) and 277–360 (VDAP…VIGN). 6 helical membrane-spanning segments follow: residues 370 to 390 (MLPVFIGIGLGVLVGSIPFYI), 402 to 424 (AGGPLVVVLILARIGTIGKLYWF), 438 to 458 (IVLFLAVVGLKSGGSFFDTLV), 463 to 483 (LEWMGYGIFITFVPLIIAGTI), 492 to 512 (YLTICGLLAGSMTDPPALAFA), and 529 to 549 (VYPLVMFLRIMSPQLLAVLLW).

It belongs to the AAE transporter (TC 2.A.81) family. YidE subfamily.

It is found in the cell membrane. The polypeptide is Putative transport protein CGSHiEE_03135 (Haemophilus influenzae (strain PittEE)).